We begin with the raw amino-acid sequence, 373 residues long: Cobalt-precorrin-5B C(1)-methyltransferase (373 aa).

The protein belongs to the CbiD family.

The catalysed reaction is Co-precorrin-5B + S-adenosyl-L-methionine = Co-precorrin-6A + S-adenosyl-L-homocysteine. It participates in cofactor biosynthesis; adenosylcobalamin biosynthesis; cob(II)yrinate a,c-diamide from sirohydrochlorin (anaerobic route): step 6/10. Catalyzes the methylation of C-1 in cobalt-precorrin-5B to form cobalt-precorrin-6A. In Listeria monocytogenes serovar 1/2a (strain ATCC BAA-679 / EGD-e), this protein is Cobalt-precorrin-5B C(1)-methyltransferase.